Reading from the N-terminus, the 479-residue chain is Ribosomal RNA small subunit methyltransferase F (479 aa).

S-adenosyl-L-methionine contacts are provided by residues 125 to 131 (AAAPGSK), glutamate 149, aspartate 176, and aspartate 194. Cysteine 247 serves as the catalytic Nucleophile.

It belongs to the class I-like SAM-binding methyltransferase superfamily. RsmB/NOP family.

The protein localises to the cytoplasm. It catalyses the reaction cytidine(1407) in 16S rRNA + S-adenosyl-L-methionine = 5-methylcytidine(1407) in 16S rRNA + S-adenosyl-L-homocysteine + H(+). Its function is as follows. Specifically methylates the cytosine at position 1407 (m5C1407) of 16S rRNA. The polypeptide is Ribosomal RNA small subunit methyltransferase F (Salmonella paratyphi C (strain RKS4594)).